The primary structure comprises 414 residues: Enterobactin exporter EntS (414 aa).

Topologically, residues 1 to 21 (MNRQSWLLNLSLLKTHPAFRA) are cytoplasmic. A helical transmembrane segment spans residues 22–42 (VFLARFISIVSLGLLGVAVPV). Residues 43-55 (QIQMMTHSTWQVG) are Periplasmic-facing. Residues 56–76 (LSVTLTGGAMFIGLMVGGVLA) form a helical membrane-spanning segment. Over 77-83 (DRYERKK) the chain is Cytoplasmic. A helical membrane pass occupies residues 84 to 104 (VILLARGTCGIGFIGLCVNAL). Topologically, residues 105–109 (LPEPS) are periplasmic. The helical transmembrane segment at 110–130 (LLAIYLLGLWDGFFASLGVTA) threads the bilayer. Topologically, residues 131 to 156 (LLAATPALVGRENLMQAGAITMLTVR) are cytoplasmic. A helical membrane pass occupies residues 157-177 (LGSVISPMLGGILLASGGVAW). N178 is a topological domain (periplasmic). Residues 179–199 (YGLAAAGTFITLLPLLTLPRL) traverse the membrane as a helical segment. Topologically, residues 200–218 (PVPPQPRENPFIALLAAFR) are cytoplasmic. A helical membrane pass occupies residues 219–239 (FLLASPLIGGIALLGGLVTMA). Over 240-256 (SAVRVLYPALAMSWQMS) the chain is Periplasmic. The chain crosses the membrane as a helical span at residues 257 to 277 (AAQIGLLYAAIPLGAAIGALT). The Cytoplasmic portion of the chain corresponds to 278-287 (SGQLAHSVRP). A helical transmembrane segment spans residues 288–307 (GLIMLVSTVGSFLAVGLFAI). The Periplasmic segment spans residues 308–313 (MPVWIA). Residues 314-336 (GVICLALFGWLSAISSLLQYTLL) form a helical membrane-spanning segment. Topologically, residues 337 to 356 (QTQTPENMLGRMNGLWTAQN) are cytoplasmic. The helical transmembrane segment at 357–377 (VTGDAIGAALLGGLGAMMTPV) threads the bilayer. A378 is a topological domain (periplasmic). Residues 379 to 399 (SASVSGFGLVIIGLLLLLVLG) form a helical membrane-spanning segment. Over 400 to 414 (ELRRFRQTPPVSDAG) the chain is Cytoplasmic.

It belongs to the major facilitator superfamily. EntS (TC 2.A.1.38) family.

The protein localises to the cell inner membrane. Component of an export pathway for enterobactin. This is Enterobactin exporter EntS from Salmonella typhimurium (strain LT2 / SGSC1412 / ATCC 700720).